A 197-amino-acid polypeptide reads, in one-letter code: MSSIKLIVGLANPGAEYAQTRHNAGAWYVDLLALRHNQQLKEESKFFGYTARLNLAGQDVRLLVPSTFMNLSGKAVAAMAGFYRILPEEILVAHDELDIPPGVAKLKLGGGNGGHNGLKDIQSKLGNNPNFYRLRIGIGHPGDKSKVTGFVLGNPPASEQTLIDDAIDESIRCTEVLLKEDITKAMNRLHSFKAGAQ.

Tyr-17 serves as a coordination point for tRNA. The Proton acceptor role is filled by His-22. The tRNA site is built by Phe-68, Asn-70, and Asn-116.

Belongs to the PTH family. In terms of assembly, monomer.

The protein localises to the cytoplasm. It carries out the reaction an N-acyl-L-alpha-aminoacyl-tRNA + H2O = an N-acyl-L-amino acid + a tRNA + H(+). Its function is as follows. Hydrolyzes ribosome-free peptidyl-tRNAs (with 1 or more amino acids incorporated), which drop off the ribosome during protein synthesis, or as a result of ribosome stalling. In terms of biological role, catalyzes the release of premature peptidyl moieties from peptidyl-tRNA molecules trapped in stalled 50S ribosomal subunits, and thus maintains levels of free tRNAs and 50S ribosomes. The protein is Peptidyl-tRNA hydrolase of Yersinia enterocolitica serotype O:8 / biotype 1B (strain NCTC 13174 / 8081).